We begin with the raw amino-acid sequence, 456 residues long: Solute carrier family 49 member 4 homolog (456 aa).

Topologically, residues 1 to 29 (MGLEWSSPGERQPLLFPGGPRSPRVFGRR) are cytoplasmic. Residues 14-15 (LL) carry the Di-leucine motif; mediates lysosomal localization motif. Residues 30–50 (WLVLLLFSVLAFLQGLVWNSW) form a helical membrane-spanning segment. Topologically, residues 51–67 (GPIQISARTAYKFSGLD) are lumenal. The helical transmembrane segment at 68-88 (IALLVLWGPIGFLPCFLFMWL) threads the bilayer. Topologically, residues 89 to 95 (MDNRGLR) are cytoplasmic. A helical transmembrane segment spans residues 96–116 (ITVLLTALLMVLGAGLRCVPV). At 117-123 (EDLAIRR) the chain is on the lumenal side. Residues 124 to 144 (ILIHGGQLLNGFAGPTVMNAA) form a helical membrane-spanning segment. Over 145–162 (PFLSTTWFAPDERATATA) the chain is Cytoplasmic. The chain crosses the membrane as a helical span at residues 163-183 (IASMLNYLGGACAFLVGPLVV). The Lumenal portion of the chain corresponds to 184–207 (PAPNSTSGLLLYSGSTDAIKDRIE). A glycan (N-linked (GlcNAc...) asparagine) is linked at Asn-187. The helical transmembrane segment at 208 to 228 (AVMYAEFGIIFVVFAAILAYF) threads the bilayer. Over 229–259 (PARPPVPPSVAAASRRLSYRTSIFRLLSNLR) the chain is Cytoplasmic. The helical transmembrane segment at 260–280 (FLLIVLAYAIPLGFYSGWIGV) threads the bilayer. The Lumenal portion of the chain corresponds to 281 to 292 (LDLILTPVHVTQ). Residues 293–313 (VDAGWVGFWSIVGGCVVGIAV) traverse the membrane as a helical segment. Residues 314–326 (GRFADSIRGVLKP) lie on the Cytoplasmic side of the membrane. A helical transmembrane segment spans residues 327 to 347 (ILLLLFSGATLSATWFTLTFL). The Lumenal portion of the chain corresponds to 348–362 (SNVTHLPLTTATLYT). Asn-349 is a glycosylation site (N-linked (GlcNAc...) asparagine). A helical membrane pass occupies residues 363–383 (SCILIGVFLNGTVPIFFELFV). Residues 384 to 392 (ETVYPIPEG) lie on the Cytoplasmic side of the membrane. A helical membrane pass occupies residues 393–413 (IACGVVTFLSNIFMGVLLVFL). Over 414 to 420 (TMYQMEL) the chain is Lumenal. Residues 421 to 441 (SWLNWCLTGSCFLSLFFIACF) form a helical membrane-spanning segment. Over 442–456 (RESYDRLYLDVFVSV) the chain is Cytoplasmic.

The protein belongs to the major facilitator superfamily.

The protein resides in the lysosome membrane. The enzyme catalyses pyridoxine(out) + n H(+)(out) = pyridoxine(in) + n H(+)(in). Functionally, mediates H(+)-dependent pyridoxine transport. This is Solute carrier family 49 member 4 homolog (slc49a4) from Xenopus laevis (African clawed frog).